The following is an 86-amino-acid chain: Large ribosomal subunit protein bL27 (86 aa).

Over residues 1–10 (MAQKKGGGST) the composition is skewed to gly residues. The segment at 1–22 (MAQKKGGGSTRNGRDSESKRLG) is disordered.

Belongs to the bacterial ribosomal protein bL27 family.

This chain is Large ribosomal subunit protein bL27, found in Polynucleobacter asymbioticus (strain DSM 18221 / CIP 109841 / QLW-P1DMWA-1) (Polynucleobacter necessarius subsp. asymbioticus).